A 133-amino-acid chain; its full sequence is NLP effector protein 14 (133 aa).

The Conserved undecapeptide motifI I signature appears at 1–9 (MYSWYFPKD). The Hepta-peptide GHRHDWE motif II signature appears at 16–22 (GHRHDWE).

Belongs to the Necrosis inducing protein (NPP1) family.

The protein resides in the secreted. Functionally, secreted effector that contributes strongly to virulence during infection by P.capsici. Causes large necrotic areas in both host C.annuum and non-host N.benthamiana. The sequence is that of NLP effector protein 14 from Phytophthora capsici.